The following is a 322-amino-acid chain: Deoxyhypusine hydroxylase (322 aa).

HEAT-like PBS-type repeat units lie at residues Leu-76–Asp-102 and Val-109–Glu-135. Fe cation is bound by residues His-78, Glu-79, His-111, Glu-112, His-236, Glu-237, His-269, and Glu-270. An HEAT-like PBS-type 3 repeat occupies Val-267–Asp-293.

The protein belongs to the deoxyhypusine hydroxylase family. Fe(2+) serves as cofactor.

The protein localises to the cytoplasm. It is found in the nucleus. It catalyses the reaction [eIF5A protein]-deoxyhypusine + AH2 + O2 = [eIF5A protein]-hypusine + A + H2O. It participates in protein modification; eIF5A hypusination. Catalyzes the hydroxylation of the N(6)-(4-aminobutyl)-L-lysine intermediate to form hypusine, an essential post-translational modification only found in mature eIF-5A factor. The chain is Deoxyhypusine hydroxylase from Kluyveromyces lactis (strain ATCC 8585 / CBS 2359 / DSM 70799 / NBRC 1267 / NRRL Y-1140 / WM37) (Yeast).